A 247-amino-acid chain; its full sequence is 2,3-bisphosphoglycerate-dependent phosphoglycerate mutase (247 aa).

Residues 8-15, 21-22, Arg60, 87-90, Lys98, 114-115, and 183-184 each bind substrate; these read RHGESQWN, TG, ERHY, RR, and GN. The active-site Tele-phosphohistidine intermediate is the His9. Catalysis depends on Glu87, which acts as the Proton donor/acceptor.

It belongs to the phosphoglycerate mutase family. BPG-dependent PGAM subfamily.

The catalysed reaction is (2R)-2-phosphoglycerate = (2R)-3-phosphoglycerate. It functions in the pathway carbohydrate degradation; glycolysis; pyruvate from D-glyceraldehyde 3-phosphate: step 3/5. Functionally, catalyzes the interconversion of 2-phosphoglycerate and 3-phosphoglycerate. In Prosthecochloris aestuarii (strain DSM 271 / SK 413), this protein is 2,3-bisphosphoglycerate-dependent phosphoglycerate mutase.